The primary structure comprises 229 residues: Large ribosomal subunit protein uL1 (229 aa).

It belongs to the universal ribosomal protein uL1 family. As to quaternary structure, part of the 50S ribosomal subunit.

In terms of biological role, binds directly to 23S rRNA. The L1 stalk is quite mobile in the ribosome, and is involved in E site tRNA release. Protein L1 is also a translational repressor protein, it controls the translation of the L11 operon by binding to its mRNA. The polypeptide is Large ribosomal subunit protein uL1 (Ureaplasma urealyticum serovar 10 (strain ATCC 33699 / Western)).